Consider the following 334-residue polypeptide: Aspartate carbamoyltransferase catalytic subunit (334 aa).

Carbamoyl phosphate is bound by residues Arg70 and Thr71. Lys98 serves as a coordination point for L-aspartate. Positions 120, 150, and 153 each coordinate carbamoyl phosphate. Positions 183 and 239 each coordinate L-aspartate. Residues Gly280 and Pro281 each contribute to the carbamoyl phosphate site.

This sequence belongs to the aspartate/ornithine carbamoyltransferase superfamily. ATCase family. Heterododecamer (2C3:3R2) of six catalytic PyrB chains organized as two trimers (C3), and six regulatory PyrI chains organized as three dimers (R2).

The catalysed reaction is carbamoyl phosphate + L-aspartate = N-carbamoyl-L-aspartate + phosphate + H(+). It functions in the pathway pyrimidine metabolism; UMP biosynthesis via de novo pathway; (S)-dihydroorotate from bicarbonate: step 2/3. Its function is as follows. Catalyzes the condensation of carbamoyl phosphate and aspartate to form carbamoyl aspartate and inorganic phosphate, the committed step in the de novo pyrimidine nucleotide biosynthesis pathway. This is Aspartate carbamoyltransferase catalytic subunit from Pseudomonas aeruginosa (strain LESB58).